The primary structure comprises 230 residues: 6-carboxyhexanoate--CoA ligase (230 aa).

The protein belongs to the BioW family. Homodimer. Mg(2+) is required as a cofactor.

The enzyme catalyses heptanedioate + ATP + CoA = 6-carboxyhexanoyl-CoA + AMP + diphosphate. It participates in metabolic intermediate metabolism; pimeloyl-CoA biosynthesis; pimeloyl-CoA from pimelate: step 1/1. Functionally, catalyzes the transformation of pimelate into pimeloyl-CoA with concomitant hydrolysis of ATP to AMP. In Staphylococcus aureus (strain MRSA252), this protein is 6-carboxyhexanoate--CoA ligase.